Here is a 1087-residue protein sequence, read N- to C-terminus: Exportin-7 (1087 aa).

Ala-2 carries the post-translational modification N-acetylalanine. The region spanning 30 to 96 (AEKALVEFTN…RNYVLNYLAT (67 aa)) is the Importin N-terminal domain. Residue Ser-570 is modified to Phosphoserine.

Belongs to the exportin family. Binds to nucleoporins. Found in a complex with XPO7, EIF4A1, ARHGAP1, VPS26A, VPS29, VPS35 and SFN. Interacts with ARHGAP1 and SFN. Interacts with Ran and cargo proteins in a GTP-dependent manner.

It localises to the cytoplasm. Its subcellular location is the nucleus. The protein resides in the nuclear pore complex. Functionally, mediates the nuclear export of proteins (cargos) with broad substrate specificity. In the nucleus binds cooperatively to its cargo and to the GTPase Ran in its active GTP-bound form. Docking of this trimeric complex to the nuclear pore complex (NPC) is mediated through binding to nucleoporins. Upon transit of a nuclear export complex into the cytoplasm, disassembling of the complex and hydrolysis of Ran-GTP to Ran-GDP (induced by RANBP1 and RANGAP1, respectively) cause release of the cargo from the export receptor. XPO7 then return to the nuclear compartment and mediate another round of transport. The directionality of nuclear export is thought to be conferred by an asymmetric distribution of the GTP- and GDP-bound forms of Ran between the cytoplasm and nucleus. The protein is Exportin-7 (XPO7) of Pongo abelii (Sumatran orangutan).